Consider the following 69-residue polypeptide: Light-harvesting protein B-1015 beta chain (69 aa).

Residues 2 to 21 (ADLKPSLTGLTEEEAKEFHG) lie on the Cytoplasmic side of the membrane. A bacteriochlorophyll-binding residues include His20 and His38. The helical transmembrane segment at 22-44 (IFVTSTVLYLATAVIVHYLVWTA) threads the bilayer. The Periplasmic portion of the chain corresponds to 45 to 56 (RPWIAPIPKGWV). Residues 57-69 (NLEGVQSALSYLV) constitute a propeptide that is removed on maturation.

This sequence belongs to the antenna complex beta subunit family. The core complex is formed by different alpha and beta chains, binding bacteriochlorophyll molecules, and arranged most probably in tetrameric structures disposed around the reaction center. The non-pigmented gamma chains may constitute additional components.

The protein localises to the cell inner membrane. Its function is as follows. Antenna complexes are light-harvesting systems, which transfer the excitation energy to the reaction centers. The sequence is that of Light-harvesting protein B-1015 beta chain (pufB) from Blastochloris viridis (Rhodopseudomonas viridis).